An 874-amino-acid chain; its full sequence is Alanine--tRNA ligase (874 aa).

H565, H569, C666, and H670 together coordinate Zn(2+).

It belongs to the class-II aminoacyl-tRNA synthetase family. Requires Zn(2+) as cofactor.

The protein localises to the cytoplasm. The catalysed reaction is tRNA(Ala) + L-alanine + ATP = L-alanyl-tRNA(Ala) + AMP + diphosphate. Catalyzes the attachment of alanine to tRNA(Ala) in a two-step reaction: alanine is first activated by ATP to form Ala-AMP and then transferred to the acceptor end of tRNA(Ala). Also edits incorrectly charged Ser-tRNA(Ala) and Gly-tRNA(Ala) via its editing domain. In Polynucleobacter asymbioticus (strain DSM 18221 / CIP 109841 / QLW-P1DMWA-1) (Polynucleobacter necessarius subsp. asymbioticus), this protein is Alanine--tRNA ligase.